Reading from the N-terminus, the 351-residue chain is MFVIEAVKSDVDANIQHKINQKTKPLGALGQLESLALQIARVQYRGDKQSLSTPLQITKPTMLVFAADHGIAAYGVSIAPSEVTTQMVHNFVQGGAAINVFCRQVGFELEIIDCGILQPLTGQANVIDQRLGAGTKAMHLAAAMPLEKVAQGFEFARQLVARHIDVGCNLIALGEMGIGNTSAATAVMSAMLNIDVEQCVGRGTGIDDATLVIKTKLINQALDLHQHELVSPEAILAHVGGFEIVQMTGAILAAAEQKILVVIDGFIATAAALVAVKLSPQSRDYLVFAHESQEQGHKLLLQQLQATPLLSLGLRLGEGTGAALALPLIQAAVNFYNQMASFDDAGVNNVV.

Catalysis depends on glutamate 318, which acts as the Proton acceptor.

Belongs to the CobT family.

The enzyme catalyses 5,6-dimethylbenzimidazole + nicotinate beta-D-ribonucleotide = alpha-ribazole 5'-phosphate + nicotinate + H(+). Its pathway is nucleoside biosynthesis; alpha-ribazole biosynthesis; alpha-ribazole from 5,6-dimethylbenzimidazole: step 1/2. In terms of biological role, catalyzes the synthesis of alpha-ribazole-5'-phosphate from nicotinate mononucleotide (NAMN) and 5,6-dimethylbenzimidazole (DMB). This chain is Nicotinate-nucleotide--dimethylbenzimidazole phosphoribosyltransferase, found in Shewanella frigidimarina (strain NCIMB 400).